We begin with the raw amino-acid sequence, 810 residues long: Phenylalanine--tRNA ligase beta subunit (810 aa).

Positions 39-150 (RTWANGVVVG…ENLPLGSDVR (112 aa)) constitute a tRNA-binding domain. The B5 domain occupies 411-495 (TWSRSIFLRL…RLYGYDNFCD (85 aa)). The Mg(2+) site is built by Asp-473, Asp-479, Glu-482, and Glu-483. One can recognise an FDX-ACB domain in the interval 716 to 809 (STYPASDRDI…LVEKFGVNLR (94 aa)).

The protein belongs to the phenylalanyl-tRNA synthetase beta subunit family. Type 1 subfamily. Tetramer of two alpha and two beta subunits. The cofactor is Mg(2+).

It localises to the cytoplasm. The enzyme catalyses tRNA(Phe) + L-phenylalanine + ATP = L-phenylalanyl-tRNA(Phe) + AMP + diphosphate + H(+). The polypeptide is Phenylalanine--tRNA ligase beta subunit (Trichormus variabilis (strain ATCC 29413 / PCC 7937) (Anabaena variabilis)).